Consider the following 416-residue polypeptide: Glutamyl-tRNA reductase (416 aa).

Residues 46 to 49, Ser97, 102 to 104, and Gln108 contribute to the substrate site; these read TCNR and DHE. The active-site Nucleophile is the Cys47. An NADP(+)-binding site is contributed by 178–183; the sequence is GAGMAA.

This sequence belongs to the glutamyl-tRNA reductase family. Homodimer.

It catalyses the reaction (S)-4-amino-5-oxopentanoate + tRNA(Glu) + NADP(+) = L-glutamyl-tRNA(Glu) + NADPH + H(+). It participates in porphyrin-containing compound metabolism; protoporphyrin-IX biosynthesis; 5-aminolevulinate from L-glutamyl-tRNA(Glu): step 1/2. Catalyzes the NADPH-dependent reduction of glutamyl-tRNA(Glu) to glutamate 1-semialdehyde (GSA). The protein is Glutamyl-tRNA reductase of Aeropyrum pernix (strain ATCC 700893 / DSM 11879 / JCM 9820 / NBRC 100138 / K1).